The chain runs to 82 residues: Small ribosomal subunit protein bS16 (82 aa).

This sequence belongs to the bacterial ribosomal protein bS16 family.

The protein is Small ribosomal subunit protein bS16 of Marinomonas sp. (strain MWYL1).